The chain runs to 465 residues: Eukaryotic translation initiation factor 3 subunit M (465 aa).

The 169-residue stretch at 215–383 folds into the PCI domain; the sequence is EEMSYNHVIL…GEFLVHRATY (169 aa). The disordered stretch occupies residues 429-465; the sequence is AAAESGREGGARGGAGERRRGGGGHQGPREVDLVGGD. 2 stretches are compositionally biased toward basic and acidic residues: residues 433–448 and 455–465; these read SGRE…ERRR and GPREVDLVGGD.

The protein belongs to the eIF-3 subunit M family. In terms of assembly, component of the eukaryotic translation initiation factor 3 (eIF-3) complex.

Its subcellular location is the cytoplasm. Functionally, component of the eukaryotic translation initiation factor 3 (eIF-3) complex, which is involved in protein synthesis of a specialized repertoire of mRNAs and, together with other initiation factors, stimulates binding of mRNA and methionyl-tRNAi to the 40S ribosome. The eIF-3 complex specifically targets and initiates translation of a subset of mRNAs involved in cell proliferation. The protein is Eukaryotic translation initiation factor 3 subunit M of Coccidioides immitis (strain RS) (Valley fever fungus).